A 566-amino-acid polypeptide reads, in one-letter code: Serine/threonine-protein kinase haspin homolog (566 aa).

The 319-residue stretch at 248-566 (LLNTKKIGEG…HCANYLFNLN (319 aa)) folds into the Protein kinase domain. ATP is bound by residues 254–262 (IGEGAYGEV), K282, 377–382 (KFAGSD), 418–423 (DLHLGN), and 456–458 (DYT). Catalysis depends on D418, which acts as the Proton acceptor.

The protein belongs to the protein kinase superfamily. Ser/Thr protein kinase family. Haspin subfamily. Interacts with pds5 and vtd. It depends on Mg(2+) as a cofactor.

The protein resides in the nucleus lamina. Its subcellular location is the chromosome. It is found in the cytoplasm. It localises to the cytoskeleton. The protein localises to the spindle. The enzyme catalyses L-seryl-[protein] + ATP = O-phospho-L-seryl-[protein] + ADP + H(+). The catalysed reaction is L-threonyl-[protein] + ATP = O-phospho-L-threonyl-[protein] + ADP + H(+). Its function is as follows. Serine/threonine-protein kinase that phosphorylates histone H3 at 'Thr-4' (H3T3ph) during mitosis and interphase. Function is essential for chromosome organization during mitosis and genome organization in interphase cells, thus playing a functional role in gene regulation. During mitosis, may act through H3T3ph to both position and modulate activation of AURKB and other components of the chromosomal passenger complex (CPC) at centromeres to ensure proper chromatid cohesion, metaphase alignment and normal progression through the cell cycle. During interphase, associates with the cohesion complex and mediates pds5 binding to chromatin to ensure correct sister chromatid cohesion, chromatin organization, and also functions with Pds5-cohesin to modify Polycomb-dependent homeotic transformations. Function during interphase is required for insulator activity, nuclear compaction, heterochromatin-induced position-effect variegation and PcG-mediated pairing-sensitive silencing. In Drosophila melanogaster (Fruit fly), this protein is Serine/threonine-protein kinase haspin homolog.